A 566-amino-acid polypeptide reads, in one-letter code: Arginine--tRNA ligase (566 aa).

The short motif at 120–130 is the 'HIGH' region element; that stretch reads PNIAKPFHVGH.

It belongs to the class-I aminoacyl-tRNA synthetase family. As to quaternary structure, monomer.

Its subcellular location is the cytoplasm. The enzyme catalyses tRNA(Arg) + L-arginine + ATP = L-arginyl-tRNA(Arg) + AMP + diphosphate. The chain is Arginine--tRNA ligase from Clostridium kluyveri (strain NBRC 12016).